We begin with the raw amino-acid sequence, 457 residues long: Protein OS-9 homolog (457 aa).

The signal sequence occupies residues 1 to 22; that stretch reads MIFLPVTSVVFAISWIYSGVSA. N-linked (GlcNAc...) asparagine glycosylation is found at N47 and N71. Residues 104–222 enclose the MRH domain; that stretch reads NPIEMNTVPI…RLFLPQLCEL (119 aa). A mannooligosaccharide derivative is bound at residue W116. N-linked (GlcNAc...) asparagine glycosylation is found at N142 and N147. 2 disulfide bridges follow: C174–C208 and C189–C220. A mannooligosaccharide derivative is bound by residues D175, R181, E204, and Y210. The N-linked (GlcNAc...) asparagine glycan is linked to N389.

Belongs to the OS-9 family. In terms of assembly, interacts with missfolded ER lumenal proteins.

It localises to the endoplasmic reticulum membrane. Lectin involved in the quality control of the secretory pathway. As a member of the endoplasmic reticulum-associated degradation lumenal (ERAD-L) surveillance system, targets misfolded endoplasmic reticulum lumenal glycoproteins for degradation. This is Protein OS-9 homolog (YOS9) from Kluyveromyces lactis (strain ATCC 8585 / CBS 2359 / DSM 70799 / NBRC 1267 / NRRL Y-1140 / WM37) (Yeast).